A 754-amino-acid chain; its full sequence is uncharacterized protein (754 aa).

10 helical membrane-spanning segments follow: residues 3-23 (ITTVGVCIISGIFPLLILPQL), 24-44 (PGTLTLAFLTLFACVLAFIPV), 50-70 (IALTLLFFVWGILSAKQILWA), 223-243 (HLMAISGLHIAFAALLAAGLI), 254-274 (WIHWQIPLIGGICCAAFYAWL), 320-340 (VAILSQSLWLSAAAVAALIFW), 370-390 (LLLMPVQIVIFHGISLTSFIA), 392-412 (LLAIPLVTFITVPLILAAMVV), 446-466 (WINIAECWQWLSFSPWFLLVV), and 471-491 (AWRTLPAMCVAGGLLMCWPLW).

To B.subtilis ComEC, N.gonorrhoeae ComA, and H.influenzae Rec2.

Its subcellular location is the cell membrane. This is an uncharacterized protein from Escherichia coli (strain K12).